The following is a 202-amino-acid chain: uncharacterized protein (202 aa).

Positions 118-202 are disordered; sequence SSVSPVSSKK…KVSGTKKVKA (85 aa). Residue Ser-121 is modified to Phosphoserine. Basic residues-rich tracts occupy residues 142 to 163 and 186 to 202; these read EKSK…KSKR and SSKS…KVKA.

It is found in the nucleus. The protein resides in the nucleolus. This is an uncharacterized protein from Schizosaccharomyces pombe (strain 972 / ATCC 24843) (Fission yeast).